The chain runs to 500 residues: L-arabinose isomerase (500 aa).

Residues glutamate 306, glutamate 333, histidine 350, and histidine 450 each contribute to the Mn(2+) site.

Belongs to the arabinose isomerase family. Homohexamer. Mn(2+) serves as cofactor.

The catalysed reaction is beta-L-arabinopyranose = L-ribulose. The protein operates within carbohydrate degradation; L-arabinose degradation via L-ribulose; D-xylulose 5-phosphate from L-arabinose (bacterial route): step 1/3. Its function is as follows. Catalyzes the conversion of L-arabinose to L-ribulose. The sequence is that of L-arabinose isomerase from Salmonella arizonae (strain ATCC BAA-731 / CDC346-86 / RSK2980).